The sequence spans 437 residues: Transcription factor AP-2-alpha (437 aa).

Lys10 participates in a covalent cross-link: Glycyl lysine isopeptide (Lys-Gly) (interchain with G-Cter in SUMO); alternate. Lys10 is covalently cross-linked (Glycyl lysine isopeptide (Lys-Gly) (interchain with G-Cter in SUMO2); alternate). The tract at residues 14 to 107 (CEDRHDGTSN…GQRQSQESGL (94 aa)) is disordered. A PPxY motif motif is present at residues 57–62 (YFPPPY). Composition is skewed to low complexity over residues 65–74 (IYPQSQDPYS) and 88–101 (QPQPQHPGWPGQRQ). Residues Lys177 and Lys184 each participate in a glycyl lysine isopeptide (Lys-Gly) (interchain with G-Cter in SUMO2) cross-link. At Ser239 the chain carries Phosphoserine; by PKA. The segment at 280-410 (RRKAANVTLL…YLTEALKAMD (131 aa)) is H-S-H (helix-span-helix), dimerization. The span at 414–427 (LSNNPNSHTDNSAK) shows a compositional bias: polar residues. The tract at residues 414–437 (LSNNPNSHTDNSAKSSDKEEKHRK) is disordered. Over residues 428–437 (SSDKEEKHRK) the composition is skewed to basic and acidic residues.

It belongs to the AP-2 family. As to quaternary structure, binds DNA as a dimer. Can form homodimers or heterodimers with other AP-2 family members. Interacts with WWOX. Interacts with UBE2I. Interacts with RALBP1 in a complex also containing EPN1 and NUMB during interphase and mitosis. Interacts with CITED4. Interacts with KCTD1; this interaction represses transcription activation. Interacts (via C-terminus) with CITED2 (via C-terminus); the interaction stimulates TFAP2A-transcriptional activation. Interacts (via N-terminus) with EP300 (via N-terminus); the interaction requires CITED2. Interacts with KCTD15; this interaction inhibits TFAP2A transcriptional activation. In terms of processing, sumoylated on Lys-10; which inhibits transcriptional activity.

Its subcellular location is the nucleus. Sequence-specific DNA-binding protein that interacts with inducible viral and cellular enhancer elements to regulate transcription of selected genes. AP-2 factors bind to the consensus sequence 5'-GCCNNNGGC-3' and activate genes involved in a large spectrum of important biological functions including proper eye, face, body wall, limb and neural tube development. They also suppress a number of genes including MCAM/MUC18, C/EBP alpha and MYC. AP-2-alpha is the only AP-2 protein required for early morphogenesis of the lens vesicle. Together with the CITED2 coactivator, stimulates the PITX2 P1 promoter transcription activation. Associates with chromatin to the PITX2 P1 promoter region. The protein is Transcription factor AP-2-alpha (Tfap2a) of Mus musculus (Mouse).